Here is a 326-residue protein sequence, read N- to C-terminus: Malate dehydrogenase (326 aa).

Residue 11 to 17 (GAAGQIG) coordinates NAD(+). Substrate contacts are provided by Arg-92 and Arg-98. Residues Asn-105, Gln-112, and 129-131 (VGN) each bind NAD(+). Asn-131 and Arg-162 together coordinate substrate. His-187 functions as the Proton acceptor in the catalytic mechanism.

This sequence belongs to the LDH/MDH superfamily. MDH type 2 family.

It carries out the reaction (S)-malate + NAD(+) = oxaloacetate + NADH + H(+). Catalyzes the reversible oxidation of malate to oxaloacetate. The protein is Malate dehydrogenase of Chromobacterium violaceum (strain ATCC 12472 / DSM 30191 / JCM 1249 / CCUG 213 / NBRC 12614 / NCIMB 9131 / NCTC 9757 / MK).